Here is a 500-residue protein sequence, read N- to C-terminus: C6 finger domain transcription factor sirZ (500 aa).

The segment at residues 28–54 is a DNA-binding region (zn(2)-C6 fungal-type); that stretch reads CNACHEVKLKCLGGQPCARCRNKQVEC. Positions 79–88 are enriched in basic and acidic residues; it reads QAKAMSRPEE. 2 disordered regions span residues 79-168 and 302-332; these read QAKA…EQIS and AGSFSTSGPGSSQEGSHFLSSRHSQSSGMYQ. A compositionally biased stretch (acidic residues) spans 135–147; sequence GAEEELLDQEERD. Residues 154 to 165 show a composition bias toward low complexity; sequence LVENPPNLNPLE. Polar residues predominate over residues 304-316; the sequence is SFSTSGPGSSQEG. The segment covering 317 to 328 has biased composition (low complexity); sequence SHFLSSRHSQSS.

The protein localises to the nucleus. Its function is as follows. Transcription factor that regulates sirodesmin production and contributes to virulence. Probably binds to the consensus motif TCGGN(3)CCGA found in the promoters of sirT, sirP, sirO, sirN, sirP, sirB, sirR, sirJ and sirQ. This is C6 finger domain transcription factor sirZ from Leptosphaeria maculans (Blackleg fungus).